The primary structure comprises 474 residues: Probable periplasmic serine endoprotease DegP-like (474 aa).

The first 26 residues, Met1–Ala26, serve as a signal peptide directing secretion. Active-site charge relay system residues include His116, Asp146, and Ser219. Substrate-binding positions include Gly217–Ser219 and Leu274–Ile278. 2 consecutive PDZ domains span residues Leu263–Gly354 and Thr360–Gly462.

The protein belongs to the peptidase S1C family.

It localises to the periplasm. The enzyme catalyses Acts on substrates that are at least partially unfolded. The cleavage site P1 residue is normally between a pair of hydrophobic residues, such as Val-|-Val.. Might be efficient in the degradation of transiently denatured and unfolded proteins which accumulate in the periplasm following stress conditions. In Halomonas elongata (strain ATCC 33173 / DSM 2581 / NBRC 15536 / NCIMB 2198 / 1H9), this protein is Probable periplasmic serine endoprotease DegP-like (mucD).